Reading from the N-terminus, the 359-residue chain is Phosphate acyltransferase (359 aa).

Residues 335-359 are disordered; sequence SGAGGAATGSPETDAPNPHPDSRAA.

Belongs to the PlsX family. Homodimer. Probably interacts with PlsY.

It is found in the cytoplasm. It carries out the reaction a fatty acyl-[ACP] + phosphate = an acyl phosphate + holo-[ACP]. Its pathway is lipid metabolism; phospholipid metabolism. Its function is as follows. Catalyzes the reversible formation of acyl-phosphate (acyl-PO(4)) from acyl-[acyl-carrier-protein] (acyl-ACP). This enzyme utilizes acyl-ACP as fatty acyl donor, but not acyl-CoA. The sequence is that of Phosphate acyltransferase from Cupriavidus metallidurans (strain ATCC 43123 / DSM 2839 / NBRC 102507 / CH34) (Ralstonia metallidurans).